Here is a 397-residue protein sequence, read N- to C-terminus: Carnitine transport ATP-binding protein OpuCA (397 aa).

The region spanning 2–236 (LKFEHVTKTY…PANSFVEDFI (235 aa)) is the ABC transporter domain. ATP is bound at residue 35–42 (GPSGCGKT). 2 CBS domains span residues 255 to 311 (MNTN…ATSV) and 315 to 373 (IEKN…WGTL). The segment at 377 to 397 (TENQEEQADSKTTEPEMKQEG) is disordered. Basic and acidic residues predominate over residues 384-397 (ADSKTTEPEMKQEG).

This sequence belongs to the ABC transporter superfamily. As to quaternary structure, the complex is composed of two ATP-binding proteins (OpuCA), two transmembrane proteins (OpuCB and OpuCD) and a solute-binding protein (OpuCC).

The catalysed reaction is a quaternary ammonium(out) + ATP + H2O = a quaternary ammonium(in) + ADP + phosphate + H(+). Its function is as follows. Part of the ABC transporter complex OpuCABCD involved in carnitine uptake. Probably responsible for energy coupling to the transport system. Involved, with BetL and GbuABC, in osmoprotection and cryoprotection of Listeria. Can also mediate weak glycine betaine transport. The polypeptide is Carnitine transport ATP-binding protein OpuCA (opuCA) (Listeria monocytogenes serotype 1/2a (strain 10403S)).